We begin with the raw amino-acid sequence, 130 residues long: Histone H2A type 1 (130 aa).

The disordered stretch occupies residues 1-22 (MSGRGKQGGKTRAKAKTRSSRA). N-acetylserine is present on Ser-2. Phosphoserine is present on Ser-2. Position 6 is an N6-(2-hydroxyisobutyryl)lysine (Lys-6). The residue at position 6 (Lys-6) is an N6-acetyllysine. Residues 7–19 (QGGKTRAKAKTRS) are compositionally biased toward basic residues. Lys-10 carries the N6-(2-hydroxyisobutyryl)lysine; alternate modification. Position 10 is an N6-lactoyllysine; alternate (Lys-10). The residue at position 10 (Lys-10) is an N6-succinyllysine. Residues Lys-14 and Lys-16 each participate in a glycyl lysine isopeptide (Lys-Gly) (interchain with G-Cter in ubiquitin) cross-link. An N6-(2-hydroxyisobutyryl)lysine; alternate modification is found at Lys-37. N6-(2-hydroxyisobutyryl)lysine occurs at positions 75 and 76. Lys-96 bears the N6-(2-hydroxyisobutyryl)lysine; alternate mark. Lys-96 is modified (N6-succinyllysine). Lys-96 is subject to N6-glutaryllysine; alternate. Residue Gln-105 is modified to N5-methylglutamine. Lys-119 carries the post-translational modification N6-(2-hydroxyisobutyryl)lysine; alternate. N6-glutaryllysine; alternate is present on Lys-119. A Glycyl lysine isopeptide (Lys-Gly) (interchain with G-Cter in ubiquitin) cross-link involves residue Lys-120.

It belongs to the histone H2A family. The nucleosome is a histone octamer containing two molecules each of H2A, H2B, H3 and H4 assembled in one H3-H4 heterotetramer and two H2A-H2B heterodimers. The octamer wraps approximately 147 bp of DNA. Monoubiquitination of Lys-120 (H2AK119Ub) gives a specific tag for epigenetic transcriptional repression. Following DNA double-strand breaks (DSBs), it is ubiquitinated through 'Lys-63' linkage of ubiquitin moieties, leading to the recruitment of repair proteins to sites of DNA damage. H2AK119Ub and ionizing radiation-induced 'Lys-63'-linked ubiquitination are distinct events. In terms of processing, phosphorylation on Ser-2 is enhanced during mitosis. Phosphorylation on Ser-2 directly represses transcription. Post-translationally, glutamine methylation at Gln-105 (H2AQ104me) by FBL is specifically dedicated to polymerase I. It is present at 35S ribosomal DNA locus and impairs binding of the FACT complex.

Its subcellular location is the nucleus. The protein localises to the chromosome. Its function is as follows. Core component of nucleosome. Nucleosomes wrap and compact DNA into chromatin, limiting DNA accessibility to the cellular machineries which require DNA as a template. Histones thereby play a central role in transcription regulation, DNA repair, DNA replication and chromosomal stability. DNA accessibility is regulated via a complex set of post-translational modifications of histones, also called histone code, and nucleosome remodeling. In Xenopus laevis (African clawed frog), this protein is Histone H2A type 1.